A 524-amino-acid polypeptide reads, in one-letter code: 2-isopropylmalate synthase (524 aa).

Residues 12 to 274 (VIIFDTTLRD…WNRIESKMLT (263 aa)) form the Pyruvate carboxyltransferase domain. Mn(2+)-binding residues include D21, H209, H211, and N245. The segment at 398 to 524 (RLKSLTVIAG…QDAPAVAVAG (127 aa)) is regulatory domain.

The protein belongs to the alpha-IPM synthase/homocitrate synthase family. LeuA type 1 subfamily. Homodimer. It depends on Mn(2+) as a cofactor.

The protein localises to the cytoplasm. It catalyses the reaction 3-methyl-2-oxobutanoate + acetyl-CoA + H2O = (2S)-2-isopropylmalate + CoA + H(+). It functions in the pathway amino-acid biosynthesis; L-leucine biosynthesis; L-leucine from 3-methyl-2-oxobutanoate: step 1/4. Functionally, catalyzes the condensation of the acetyl group of acetyl-CoA with 3-methyl-2-oxobutanoate (2-ketoisovalerate) to form 3-carboxy-3-hydroxy-4-methylpentanoate (2-isopropylmalate). The chain is 2-isopropylmalate synthase from Rhodopseudomonas palustris (strain BisB5).